Consider the following 217-residue polypeptide: Octanoyltransferase (217 aa).

The BPL/LPL catalytic domain maps to 30–209; the sequence is GNRPPTLLLL…AFAEVFGLRP (180 aa). Substrate contacts are provided by residues 75-82, 139-141, and 152-154; these read RGGDVTYH, AIG, and GFA. Residue C170 is the Acyl-thioester intermediate of the active site.

Belongs to the LipB family.

It localises to the cytoplasm. It carries out the reaction octanoyl-[ACP] + L-lysyl-[protein] = N(6)-octanoyl-L-lysyl-[protein] + holo-[ACP] + H(+). It participates in protein modification; protein lipoylation via endogenous pathway; protein N(6)-(lipoyl)lysine from octanoyl-[acyl-carrier-protein]: step 1/2. Catalyzes the transfer of endogenously produced octanoic acid from octanoyl-acyl-carrier-protein onto the lipoyl domains of lipoate-dependent enzymes. Lipoyl-ACP can also act as a substrate although octanoyl-ACP is likely to be the physiological substrate. The polypeptide is Octanoyltransferase (Thermus thermophilus (strain ATCC 27634 / DSM 579 / HB8)).